The chain runs to 178 residues: Alkyl hydroperoxide reductase AhpD (178 aa).

Catalysis depends on C130, which acts as the Proton donor. C130 and C133 form a disulfide bridge. C133 acts as the Cysteine sulfenic acid (-SOH) intermediate in catalysis.

This sequence belongs to the AhpD family. As to quaternary structure, homotrimer.

It carries out the reaction N(6)-[(R)-dihydrolipoyl]-L-lysyl-[lipoyl-carrier protein] + a hydroperoxide = N(6)-[(R)-lipoyl]-L-lysyl-[lipoyl-carrier protein] + an alcohol + H2O. Its function is as follows. Antioxidant protein with alkyl hydroperoxidase activity. Required for the reduction of the AhpC active site cysteine residues and for the regeneration of the AhpC enzyme activity. In Mycolicibacterium paratuberculosis (strain ATCC BAA-968 / K-10) (Mycobacterium paratuberculosis), this protein is Alkyl hydroperoxide reductase AhpD.